Consider the following 224-residue polypeptide: Uracil-DNA glycosylase (224 aa).

Catalysis depends on Asp-62, which acts as the Proton acceptor.

This sequence belongs to the uracil-DNA glycosylase (UDG) superfamily. UNG family.

It is found in the cytoplasm. The catalysed reaction is Hydrolyzes single-stranded DNA or mismatched double-stranded DNA and polynucleotides, releasing free uracil.. Functionally, excises uracil residues from the DNA which can arise as a result of misincorporation of dUMP residues by DNA polymerase or due to deamination of cytosine. The polypeptide is Uracil-DNA glycosylase (Aliivibrio salmonicida (strain LFI1238) (Vibrio salmonicida (strain LFI1238))).